The primary structure comprises 306 residues: tRNA pseudouridine synthase B (306 aa).

Catalysis depends on aspartate 51, which acts as the Nucleophile.

It belongs to the pseudouridine synthase TruB family. Type 1 subfamily.

The catalysed reaction is uridine(55) in tRNA = pseudouridine(55) in tRNA. Its function is as follows. Responsible for synthesis of pseudouridine from uracil-55 in the psi GC loop of transfer RNAs. This is tRNA pseudouridine synthase B from Nocardia farcinica (strain IFM 10152).